The following is a 593-amino-acid chain: Mitoguardin 2 (593 aa).

A run of 2 helical transmembrane segments spans residues 11–31 (MIQALAMTVAEIPVFLYTTFG) and 42–62 (PGLRKVLFATALGTVALALAA). Disordered stretches follow at residues 98 to 134 (PSVKKGCSSRRVQSPSSKSNDTLSGISSIEPSKHSGS), 150 to 171 (TAACSGSWEARGMEESVPTTDG), and 197 to 229 (VGQRGDGGSTPTPGDSLQNPDTASEALSEPESQ). Low complexity-rich tracts occupy residues 106-116 (SRRVQSPSSKS) and 124-134 (SSIEPSKHSGS). Position 132 is a phosphoserine (Ser-132). Residues 205–218 (STPTPGDSLQNPDT) are compositionally biased toward polar residues. Phosphothreonine is present on Thr-206. Residues Ser-220, Ser-224, and Ser-228 each carry the phosphoserine modification. Thr-273 bears the Phosphothreonine mark. Residues Ser-276 and Ser-295 each carry the phosphoserine modification. The short motif at 292–298 (SFFSATE) is the FFAT element.

It belongs to the mitoguardin family. In terms of assembly, homodimer and heterodimer; forms heterodimers with MIGA1. Interacts with PLD6/MitoPLD. Interacts (via phosphorylated FFAT motif) with MOSPD2. In terms of processing, phosphorylation at Ser-295 of the FFAT motif activates interaction with MOSPD2.

It localises to the mitochondrion outer membrane. Its function is as follows. Regulator of mitochondrial fusion. Acts by forming homo- and heterodimers at the mitochondrial outer membrane and facilitating the formation of PLD6/MitoPLD dimers. May act by regulating phospholipid metabolism via PLD6/MitoPLD. The chain is Mitoguardin 2 from Mus musculus (Mouse).